The chain runs to 360 residues: POU domain, class 5, transcription factor 1 (360 aa).

2 disordered regions span residues 1–48 and 86–137; these read MAGH…SGIG and PPGG…EESQ. Residues 4–12 carry the 9aaTAD motif; that stretch reads HLASDFAFS. A Phosphoserine; by MAPK modification is found at Ser-111. Residue Lys-123 forms a Glycyl lysine isopeptide (Lys-Gly) (interchain with G-Cter in SUMO) linkage. Over residues 123–137 the composition is skewed to basic and acidic residues; it reads KLDKEKLEPNPEESQ. The POU-specific domain occupies 138-212; it reads DIKALQKDLE…LLQKWVEEAD (75 aa). Positions 157 and 164 each coordinate DNA. DNA-binding stretches follow at residues 180–186 and 193–196; these read SQTTICR and SFKN. The segment at residues 230–289 is a DNA-binding region (homeobox); it reads RKRKRTSIENRVRGNLESMFLQCPKPTLQQISHIAQQLGLEKDVVRVWFCNRRQKGKRSS. Position 235 is a phosphothreonine (Thr-235). A phosphoserine mark is found at Ser-236, Ser-289, Ser-290, and Ser-355. Positions 287 to 322 are disordered; sequence RSSSDYSQREDFEAAGSPFTGGPVSSPLAPGPHFGT.

This sequence belongs to the POU transcription factor family. Class-5 subfamily. In terms of assembly, interacts with PKM. Interacts with WWP2. Interacts with UBE2I and ZSCAN10. Interacts with PCGF1. Interacts with ESRRB; recruits ESRRB near the POU5F1-SOX2 element in the NANOG proximal promoter; the interaction is DNA independent. Interacts with MAPK8 and MAPK9; the interaction allows MAPK8 and MAPK9 to phosphorylate POU5F1 on Ser-355. Interacts (when phosphorylated on Ser-355) with FBXW8. Interacts with FBXW4. Interacts with SOX2 and SOX15; binds synergistically with either SOX2 or SOX15 to DNA. Interacts with DDX56. In terms of processing, sumoylation enhances the protein stability, DNA binding and transactivation activity. Sumoylation is required for enhanced YES1 expression. Post-translationally, ubiquitinated; undergoes 'Lys-63'-linked polyubiquitination by WWP2 leading to proteasomal degradation. ERK1/2-mediated phosphorylation at Ser-111 promotes nuclear exclusion and proteasomal degradation. Phosphorylation at Thr-235 and Ser-236 decrease DNA-binding and alters ability to activate transcription. As to expression, expressed in immature oocytes.

The protein resides in the cytoplasm. It localises to the nucleus. Functionally, transcription factor that binds to the octamer motif (5'-ATTTGCAT-3'). Forms a trimeric complex with SOX2 or SOX15 on DNA and controls the expression of a number of genes involved in embryonic development such as YES1, FGF4, UTF1 and ZFP206. Critical for early embryogenesis and for embryonic stem cell pluripotency. The sequence is that of POU domain, class 5, transcription factor 1 (POU5F1) from Bos taurus (Bovine).